Here is a 962-residue protein sequence, read N- to C-terminus: Glycine dehydrogenase (decarboxylating) (962 aa).

Lys709 carries the N6-(pyridoxal phosphate)lysine modification.

This sequence belongs to the GcvP family. In terms of assembly, the glycine cleavage system is composed of four proteins: P, T, L and H. The cofactor is pyridoxal 5'-phosphate.

It catalyses the reaction N(6)-[(R)-lipoyl]-L-lysyl-[glycine-cleavage complex H protein] + glycine + H(+) = N(6)-[(R)-S(8)-aminomethyldihydrolipoyl]-L-lysyl-[glycine-cleavage complex H protein] + CO2. In terms of biological role, the glycine cleavage system catalyzes the degradation of glycine. The P protein binds the alpha-amino group of glycine through its pyridoxal phosphate cofactor; CO(2) is released and the remaining methylamine moiety is then transferred to the lipoamide cofactor of the H protein. The chain is Glycine dehydrogenase (decarboxylating) from Shewanella sediminis (strain HAW-EB3).